Here is a 399-residue protein sequence, read N- to C-terminus: MALYCGDNFVYSQPAAAPGAPPTSRAPYGLSDYAAPPAAAANPYLWLNGPGVGGPASAASYLGAPPPPPGAAPGPFLQPPAAPGTFAGAQRGFAQPSASAPASPAGSAAPGELGWLSMASREDLMKMVRPPYSYSALIAMAIQSAPERKLTLSHIYQFVADNFPFYQRSKAGWQNSIRHNLSLNDCFKKVPRDEDDPGKGNYWTLDPNCEKMFDNGNFRRKRRRRAEASSNLTVPSGTSKSEGQSSRLRVSGKLEGDSPSSILRPSQSPEPPEGTKSTASSPGASTLTSTPCLNTFLSTFNTLNVNSSSSMGNQRTLPGSRRHLGGTQLPSSTFPNTSVPDSSPDSMQLSTVGGSNQLSSYYNPFSGGSSGDQSSPFSSPFYNFSMVNSLIYPRDGSDI.

Disordered regions lie at residues 87–109, 221–287, and 307–353; these read AGAQ…GSAA, KRRR…ASTL, and SSSS…STVG. The segment covering 96-109 has biased composition (low complexity); sequence PSASAPASPAGSAA. Phosphoserine occurs at positions 99 and 103. A DNA-binding region (fork-head) is located at residues 129–223; that stretch reads RPPYSYSALI…DNGNFRRKRR (95 aa). The Nuclear localization signal motif lies at 219–225; that stretch reads RRKRRRR. Composition is skewed to polar residues over residues 228–248 and 258–267; these read ASSN…SSRL and SPSSILRPSQ. Phosphoserine is present on residues Ser258, Ser266, and Ser268. Composition is skewed to polar residues over residues 275-287, 307-317, and 328-353; these read TKST…ASTL, SSSSMGNQRTL, and QLPS…STVG. The short motif at 385-393 is the 9aaTAD element; sequence SMVNSLIYP.

Phosphorylation promotes the transcription factor activity. Dephosphorylation by protein phosphatase 2A (PP2A) reduces its activity. As to expression, specifically expressed in the epithelium in developing ectodermal appendages. Expressed in pharyngeal endoderm and ectoderm. Expressed in pre-placodal ectoderm. Down-regulated as the otic placode is induced. Expressed in teeth and hair follicles throughout embryogenesis. Expressed in mammary glands only during the earliest stages of development.

Its subcellular location is the nucleus. Functionally, transcription factor required for pharyngeal arch development, which is involved in hair, ear, jaw and dental development. May act as a pioneer transcription factor during pharyngeal arch development. Required for epithelial cell differentiation within the epidermis. Acts at multiple stages of otic placode induction: necessary for preplacodal ectoderm to execute an inner ear program. Required for hair follicle stem cell specification. Acts downstream of TBX1 for the formation of the thymus and parathyroid glands from the third pharyngeal pouch. The sequence is that of Forkhead box protein I3 from Mus musculus (Mouse).